Consider the following 215-residue polypeptide: Cytochrome b6 (215 aa).

Residues 32–52 traverse the membrane as a helical segment; sequence IFYCLGGITLTCFLIQFATGF. Residue Cys35 participates in heme c binding. Heme b-binding residues include His86 and His100. A run of 3 helical transmembrane segments spans residues 90–110, 116–136, and 186–206; these read ASMM…TGGF, LTWV…VTGY, and LHTF…FLMI. Positions 187 and 202 each coordinate heme b.

Belongs to the cytochrome b family. PetB subfamily. In terms of assembly, the 4 large subunits of the cytochrome b6-f complex are cytochrome b6, subunit IV (17 kDa polypeptide, PetD), cytochrome f and the Rieske protein, while the 4 small subunits are PetG, PetL, PetM and PetN. The complex functions as a dimer. Heme b is required as a cofactor. Requires heme c as cofactor.

It localises to the cellular thylakoid membrane. In terms of biological role, component of the cytochrome b6-f complex, which mediates electron transfer between photosystem II (PSII) and photosystem I (PSI), cyclic electron flow around PSI, and state transitions. This is Cytochrome b6 from Synechococcus elongatus (strain ATCC 33912 / PCC 7942 / FACHB-805) (Anacystis nidulans R2).